Consider the following 260-residue polypeptide: Putative hydro-lyase Dshi_0610 (260 aa).

The protein belongs to the D-glutamate cyclase family.

The sequence is that of Putative hydro-lyase Dshi_0610 from Dinoroseobacter shibae (strain DSM 16493 / NCIMB 14021 / DFL 12).